Consider the following 658-residue polypeptide: Carnitine O-palmitoyltransferase 2, mitochondrial (658 aa).

The N-terminal 25 residues, 1–25 (MVPRLLLRAWPRGPAVGPGAPSRPL), are a transit peptide targeting the mitochondrion. Residues 26–178 (SAGSGPGQYL…GLLEPEVFHL (153 aa)) are Mitochondrial matrix-facing. At Lys-69 the chain carries N6-succinyllysine. The residue at position 79 (Lys-79) is an N6-acetyllysine. The residue at position 85 (Lys-85) is an N6-succinyllysine. The segment at residues 179 to 208 (NPAKSDTITFKRLIRFVPSSLSWYGAYLVN) is an intramembrane region (note=Mitochondrial inner membrane). Residues 209–658 (AYPLDMSQYF…DALEGKSIKS (450 aa)) lie on the Mitochondrial matrix side of the membrane. Lys-239 carries the post-translational modification N6-acetyllysine; alternate. Lys-239 carries the post-translational modification N6-succinyllysine; alternate. The residue at position 305 (Lys-305) is an N6-acetyllysine. Residue His-372 is the Proton acceptor of the active site. N6-succinyllysine is present on residues Lys-424 and Lys-439. 452–464 (GKEFLKKQKLSPD) serves as a coordination point for CoA. (R)-carnitine is bound by residues Tyr-486, Ser-488, and Thr-499. 2 positions are modified to N6-acetyllysine; alternate: Lys-510 and Lys-544. An N6-succinyllysine; alternate mark is found at Lys-510 and Lys-544.

The protein belongs to the carnitine/choline acetyltransferase family.

The protein resides in the mitochondrion inner membrane. The catalysed reaction is (R)-carnitine + hexadecanoyl-CoA = O-hexadecanoyl-(R)-carnitine + CoA. The enzyme catalyses octanoyl-CoA + (R)-carnitine = O-octanoyl-(R)-carnitine + CoA. It carries out the reaction decanoyl-CoA + (R)-carnitine = O-decanoyl-(R)-carnitine + CoA. It catalyses the reaction dodecanoyl-CoA + (R)-carnitine = O-dodecanoyl-R-carnitine + CoA. The catalysed reaction is tetradecanoyl-CoA + (R)-carnitine = O-tetradecanoyl-(R)-carnitine + CoA. The enzyme catalyses (R)-carnitine + octadecanoyl-CoA = O-octadecanoyl-(R)-carnitine + CoA. It carries out the reaction eicosanoyl-CoA + (R)-carnitine = O-eicosanoyl-(R)-carnitine + CoA. It catalyses the reaction (9Z)-tetradecenoyl-CoA + (R)-carnitine = O-(9Z)-tetradecenoyl-(R)-carnitine + CoA. The catalysed reaction is (5Z)-tetradecenoyl-CoA + (R)-carnitine = O-(5Z)-tetradecenoyl-(R)-carnitine + CoA. The enzyme catalyses (R)-carnitine + (9Z)-octadecenoyl-CoA = O-(9Z)-octadecenoyl-(R)-carnitine + CoA. It carries out the reaction 4,8-dimethylnonanoyl-CoA + (R)-carnitine = O-4,8-dimethylnonanoyl-(R)-carnitine + CoA. The protein operates within lipid metabolism; fatty acid beta-oxidation. With respect to regulation, inhibited by trans-2-hexadecanoyl-CoA. In terms of biological role, involved in the intramitochondrial synthesis of acylcarnitines from accumulated acyl-CoA metabolites. Reconverts acylcarnitines back into the respective acyl-CoA esters that can then undergo beta-oxidation, an essential step for the mitochondrial uptake of long-chain fatty acids and their subsequent beta-oxidation in the mitochondrion. Active with medium (C8-C12) and long-chain (C14-C18) acyl-CoA esters. The protein is Carnitine O-palmitoyltransferase 2, mitochondrial of Homo sapiens (Human).